A 98-amino-acid chain; its full sequence is MEKHNHYFYVLKCADGSLYAGYTNDLQKRLMTHNSGKGAKYTRARRPVELYYHECFATKREAMQQEYRFKTWTRKKKDLYIEEMRIEKEATHEHTKKL.

Residues 4–79 form the GIY-YIG domain; it reads HNHYFYVLKC…KTWTRKKKDL (76 aa).

It belongs to the UPF0213 family.

The protein is UPF0213 protein BPUM_0019 of Bacillus pumilus (strain SAFR-032).